The sequence spans 212 residues: uncharacterized protein (212 aa).

Cys52 serves as the catalytic Acyl-thioester intermediate. Catalysis depends on residues His89 and Asp104.

The protein belongs to the arylamine N-acetyltransferase family.

This is an uncharacterized protein from Acanthamoeba polyphaga (Amoeba).